The primary structure comprises 273 residues: Tryptophan synthase alpha chain (273 aa).

Residues glutamate 49 and aspartate 60 each act as proton acceptor in the active site.

It belongs to the TrpA family. As to quaternary structure, tetramer of two alpha and two beta chains.

It catalyses the reaction (1S,2R)-1-C-(indol-3-yl)glycerol 3-phosphate + L-serine = D-glyceraldehyde 3-phosphate + L-tryptophan + H2O. It functions in the pathway amino-acid biosynthesis; L-tryptophan biosynthesis; L-tryptophan from chorismate: step 5/5. Functionally, the alpha subunit is responsible for the aldol cleavage of indoleglycerol phosphate to indole and glyceraldehyde 3-phosphate. The protein is Tryptophan synthase alpha chain of Thiobacillus denitrificans (strain ATCC 25259 / T1).